Consider the following 295-residue polypeptide: uncharacterized protein (295 aa).

Basic residues predominate over residues 57 to 67 (RKLLVKQKRKS). The disordered stretch occupies residues 57-94 (RKLLVKQKRKSNKEFQSNIIKKRKDEERKGTLKTEQAN). A compositionally biased stretch (basic and acidic residues) spans 79–88 (RKDEERKGTL). Coiled-coil stretches lie at residues 87 to 116 (TLKT…YDQY) and 259 to 286 (DVLT…LGER).

The protein localises to the nucleus. This is an uncharacterized protein from Schizosaccharomyces pombe (strain 972 / ATCC 24843) (Fission yeast).